The following is a 150-amino-acid chain: Nucleoside diphosphate kinase (150 aa).

ATP contacts are provided by Lys-10, Phe-58, Arg-86, Thr-92, Arg-103, and Asn-113. The active-site Pros-phosphohistidine intermediate is His-116.

The protein belongs to the NDK family. In terms of assembly, homohexamer. Mg(2+) serves as cofactor.

The enzyme catalyses a 2'-deoxyribonucleoside 5'-diphosphate + ATP = a 2'-deoxyribonucleoside 5'-triphosphate + ADP. The catalysed reaction is a ribonucleoside 5'-diphosphate + ATP = a ribonucleoside 5'-triphosphate + ADP. Its function is as follows. Major role in the synthesis of nucleoside triphosphates other than ATP. The ATP gamma phosphate is transferred to the NDP beta phosphate via a ping-pong mechanism, using a phosphorylated active-site intermediate. The sequence is that of Nucleoside diphosphate kinase (awd) from Drosophila yakuba (Fruit fly).